A 97-amino-acid chain; its full sequence is Sperm-associated acrosin inhibitor (97 aa).

The first 26 residues, 1–26 (MAFFSSRVRALFILVLVLPLCSETGF), serve as a signal peptide directing secretion. In terms of domain architecture, Kazal-like spans 32-90 (TRKEPDCDVYRSHLFFCTREMDPICGTNGKSYANPCIFCSEKLGRNEKFDFGHWGHCRE). Disulfide bonds link Cys-38/Cys-70, Cys-48/Cys-67, and Cys-56/Cys-88.

In terms of tissue distribution, seminal plasma.

Its subcellular location is the secreted. Its function is as follows. Inhibits acrosin. The polypeptide is Sperm-associated acrosin inhibitor (Sus scrofa (Pig)).